The sequence spans 138 residues: Acidic phospholipase A2 1 (138 aa).

The signal sequence occupies residues 1 to 16 (MRTLWIMAVLLVGVDG). 7 cysteine pairs are disulfide-bonded: Cys-42-Cys-131, Cys-44-Cys-60, Cys-59-Cys-110, Cys-65-Cys-138, Cys-66-Cys-103, Cys-73-Cys-97, and Cys-91-Cys-101. 3 residues coordinate Ca(2+): Tyr-43, Gly-45, and Gly-47. Residue His-63 is part of the active site. Residue Asp-64 coordinates Ca(2+). The active site involves Asp-104.

It belongs to the phospholipase A2 family. Group II subfamily. D49 sub-subfamily. Homodimer. It depends on Ca(2+) as a cofactor. Expressed by the venom gland.

It is found in the secreted. The enzyme catalyses a 1,2-diacyl-sn-glycero-3-phosphocholine + H2O = a 1-acyl-sn-glycero-3-phosphocholine + a fatty acid + H(+). Functionally, snake venom phospholipase A2 (PLA2) that is highly lipolytic and myolytic. PLA2 catalyzes the calcium-dependent hydrolysis of the 2-acyl groups in 3-sn-phosphoglycerides. The chain is Acidic phospholipase A2 1 from Protobothrops flavoviridis (Habu).